The following is a 200-amino-acid chain: dTTP/UTP pyrophosphatase (200 aa).

Asp-72 acts as the Proton acceptor in catalysis.

It belongs to the Maf family. YhdE subfamily. Requires a divalent metal cation as cofactor.

It localises to the cytoplasm. It catalyses the reaction dTTP + H2O = dTMP + diphosphate + H(+). It carries out the reaction UTP + H2O = UMP + diphosphate + H(+). Its function is as follows. Nucleoside triphosphate pyrophosphatase that hydrolyzes dTTP and UTP. May have a dual role in cell division arrest and in preventing the incorporation of modified nucleotides into cellular nucleic acids. The chain is dTTP/UTP pyrophosphatase from Pseudomonas syringae pv. syringae (strain B728a).